The following is a 1316-amino-acid chain: DNA-directed RNA polymerase subunit beta' (1316 aa).

Zn(2+) contacts are provided by cysteine 60, cysteine 62, cysteine 75, and cysteine 78. Residues aspartate 535, aspartate 537, and aspartate 539 each coordinate Mg(2+). Zn(2+) is bound by residues cysteine 891, cysteine 968, cysteine 975, and cysteine 978.

This sequence belongs to the RNA polymerase beta' chain family. In terms of assembly, the RNAP catalytic core consists of 2 alpha, 1 beta, 1 beta' and 1 omega subunit. When a sigma factor is associated with the core the holoenzyme is formed, which can initiate transcription. Mg(2+) is required as a cofactor. Zn(2+) serves as cofactor.

It carries out the reaction RNA(n) + a ribonucleoside 5'-triphosphate = RNA(n+1) + diphosphate. Its function is as follows. DNA-dependent RNA polymerase catalyzes the transcription of DNA into RNA using the four ribonucleoside triphosphates as substrates. The protein is DNA-directed RNA polymerase subunit beta' of Mycobacterium ulcerans (strain Agy99).